The chain runs to 467 residues: UDP-N-acetylmuramate--L-alanine ligase (467 aa).

112 to 118 contacts ATP; that stretch reads GTHGKTT.

This sequence belongs to the MurCDEF family.

The protein resides in the cytoplasm. The enzyme catalyses UDP-N-acetyl-alpha-D-muramate + L-alanine + ATP = UDP-N-acetyl-alpha-D-muramoyl-L-alanine + ADP + phosphate + H(+). The protein operates within cell wall biogenesis; peptidoglycan biosynthesis. In terms of biological role, cell wall formation. The protein is UDP-N-acetylmuramate--L-alanine ligase of Azoarcus sp. (strain BH72).